Reading from the N-terminus, the 296-residue chain is Thioredoxin-related transmembrane protein 2 (296 aa).

The N-terminal stretch at 1-48 (MAVLAPLIALVYSVPRLSRWLAQPYYLLSALLSAAFLLVRKLPPLCHG) is a signal peptide. Topologically, residues 49–102 (LPTQREDGNPCDFDWREVEILMFLSAIVMMKNRRSITVEQHIGNIFMFSKVANA) are extracellular. The helical transmembrane segment at 103–125 (ILFFRLDIRMGLLYITLCIVFLM) threads the bilayer. Residues 114–269 (LLYITLCIVF…LYQRAKKLSK (156 aa)) form the Thioredoxin domain. The Cytoplasmic segment spans residues 126-296 (TCKPPLYMGP…VSDGESKKDK (171 aa)). Residues Ser211, Ser243, and Ser288 each carry the phosphoserine modification. Residues 269–296 (KAGDNIPEEQPVAPTPTRVSDGESKKDK) form a disordered region. A Di-lysine motif motif is present at residues 293 to 296 (KKDK).

As to quaternary structure, monomer. Homodimer; disulfide-linked. Occurs in both reduced and oxidized monomeric form. Oxidative conditions increase homodimerization. Interacts with CANX. Interacts with ATP2A2.

Its subcellular location is the endoplasmic reticulum membrane. It is found in the mitochondrion membrane. Its function is as follows. Endoplasmic reticulum and mitochondria-associated protein that probably functions as a regulator of cellular redox state and thereby regulates protein post-translational modification, protein folding and mitochondrial activity. Indirectly regulates neuronal proliferation, migration, and organization in the developing brain. In Macaca fascicularis (Crab-eating macaque), this protein is Thioredoxin-related transmembrane protein 2 (TMX2).